Consider the following 379-residue polypeptide: SUN domain-containing protein 5 (379 aa).

Residues M1 to M45 form a disordered region. Residues M1 to T105 are Nuclear-facing. Residues G31–M45 are compositionally biased toward polar residues. The chain crosses the membrane as a helical span at residues G106–L122. Residues P123 to D379 are Perinuclear space-facing. Residues L141 to A182 are a coiled coil. Positions G205–A364 constitute an SUN domain.

Probable homotrimer. Interacts with DNAJB13. Highly glycosylated in the Golgi apparatus during spermiogenesis. In terms of tissue distribution, sperm (at protein level). Widely expressed. Conflictingly shown to be specifically expressed in testis.

It localises to the nucleus inner membrane. The protein localises to the golgi apparatus. In terms of biological role, plays an essential role in anchoring sperm head to the tail. Is responsible for the attachment of the coupling apparatus to the sperm nuclear envelope. In Homo sapiens (Human), this protein is SUN domain-containing protein 5 (SUN5).